Consider the following 126-residue polypeptide: Protein LLP homolog (126 aa).

Positions 1-21 (MAKSLRSKWRRKMRAEKRKKV) are enriched in basic residues. Disordered stretches follow at residues 1 to 22 (MAKS…KKVA) and 53 to 126 (VPPE…RLAW). The span at 73 to 94 (DGGKMDLDTKRNKKTMLDEHGR) shows a compositional bias: basic and acidic residues. Residues 103 to 126 (QAKKLKAKRVGKNGKPKPKKRLAW) show a composition bias toward basic residues.

It belongs to the learning-associated protein family.

It localises to the nucleus. Its subcellular location is the nucleolus. The protein resides in the chromosome. Its function is as follows. Regulates dendritic and spine growth and synaptic transmission. The protein is Protein LLP homolog (llph) of Danio rerio (Zebrafish).